The chain runs to 265 residues: Imidazole glycerol phosphate synthase subunit HisF (265 aa).

Active-site residues include aspartate 17 and aspartate 136.

This sequence belongs to the HisA/HisF family. In terms of assembly, heterodimer of HisH and HisF.

Its subcellular location is the cytoplasm. It catalyses the reaction 5-[(5-phospho-1-deoxy-D-ribulos-1-ylimino)methylamino]-1-(5-phospho-beta-D-ribosyl)imidazole-4-carboxamide + L-glutamine = D-erythro-1-(imidazol-4-yl)glycerol 3-phosphate + 5-amino-1-(5-phospho-beta-D-ribosyl)imidazole-4-carboxamide + L-glutamate + H(+). Its pathway is amino-acid biosynthesis; L-histidine biosynthesis; L-histidine from 5-phospho-alpha-D-ribose 1-diphosphate: step 5/9. Functionally, IGPS catalyzes the conversion of PRFAR and glutamine to IGP, AICAR and glutamate. The HisF subunit catalyzes the cyclization activity that produces IGP and AICAR from PRFAR using the ammonia provided by the HisH subunit. The chain is Imidazole glycerol phosphate synthase subunit HisF from Mycolicibacterium paratuberculosis (strain ATCC BAA-968 / K-10) (Mycobacterium paratuberculosis).